Here is a 151-residue protein sequence, read N- to C-terminus: Probable cGMP 3',5'-cyclic phosphodiesterase subunit delta (151 aa).

It belongs to the PDE6D/unc-119 family. In terms of assembly, interacts with Pde6.

It is found in the nucleus. Its subcellular location is the cytoplasm. This is Probable cGMP 3',5'-cyclic phosphodiesterase subunit delta from Drosophila sechellia (Fruit fly).